The following is a 313-amino-acid chain: Ribosomal RNA small subunit methyltransferase H (313 aa).

S-adenosyl-L-methionine is bound by residues 35 to 37 (GGH), Asp55, Phe79, Asp101, and Gln108.

The protein belongs to the methyltransferase superfamily. RsmH family.

The protein resides in the cytoplasm. It carries out the reaction cytidine(1402) in 16S rRNA + S-adenosyl-L-methionine = N(4)-methylcytidine(1402) in 16S rRNA + S-adenosyl-L-homocysteine + H(+). In terms of biological role, specifically methylates the N4 position of cytidine in position 1402 (C1402) of 16S rRNA. This is Ribosomal RNA small subunit methyltransferase H from Escherichia coli O6:H1 (strain CFT073 / ATCC 700928 / UPEC).